The chain runs to 233 residues: Probable septum site-determining protein MinC (233 aa).

A disordered region spans residues 98-123 (LTEGKEKAPRPAPSEPTPPPPPVANQ). Residues 107–120 (RPAPSEPTPPPPPV) are compositionally biased toward pro residues.

This sequence belongs to the MinC family. As to quaternary structure, interacts with MinD and FtsZ.

Functionally, cell division inhibitor that blocks the formation of polar Z ring septums. Rapidly oscillates between the poles of the cell to destabilize FtsZ filaments that have formed before they mature into polar Z rings. Prevents FtsZ polymerization. The chain is Probable septum site-determining protein MinC from Klebsiella pneumoniae (strain 342).